A 124-amino-acid chain; its full sequence is Small ribosomal subunit protein uS13 (124 aa).

The interval 95 to 124 (GLPVRGQRTKTNARTRKGPKRTIAGKKKAK) is disordered.

The protein belongs to the universal ribosomal protein uS13 family. As to quaternary structure, part of the 30S ribosomal subunit. Forms a loose heterodimer with protein S19. Forms two bridges to the 50S subunit in the 70S ribosome.

Located at the top of the head of the 30S subunit, it contacts several helices of the 16S rRNA. In the 70S ribosome it contacts the 23S rRNA (bridge B1a) and protein L5 of the 50S subunit (bridge B1b), connecting the 2 subunits; these bridges are implicated in subunit movement. Contacts the tRNAs in the A and P-sites. The chain is Small ribosomal subunit protein uS13 from Rhodococcus erythropolis (strain PR4 / NBRC 100887).